Consider the following 723-residue polypeptide: ATP-dependent zinc metalloprotease YME1 homolog (723 aa).

Residues 198 to 220 (LTRFYIFLVFCIFFGYLTGRIRV) traverse the membrane as a helical segment. 288–295 (GPPGTGKT) provides a ligand contact to ATP. H509 provides a ligand contact to Zn(2+). The active site involves E510. H513 and D587 together coordinate Zn(2+).

In the N-terminal section; belongs to the AAA ATPase family. The protein in the C-terminal section; belongs to the peptidase M41 family. Zn(2+) is required as a cofactor.

The protein localises to the mitochondrion inner membrane. The protein resides in the mitochondrion. ATP-dependent metalloprotease that catalyzes the degradation of folded and unfolded proteins with a suitable degron sequence in the mitochondrial intermembrane region. Plays an important role in regulating mitochondrial morphology and function. This chain is ATP-dependent zinc metalloprotease YME1 homolog (ymel-1), found in Caenorhabditis elegans.